Here is a 620-residue protein sequence, read N- to C-terminus: MASAFSLLTAGGAKFDKNRFKDDFQLFEAKKRKDRKGKSKQIDALAAGSALPSSLDFFGDHPHPQHKPEPEPESESESDFESDSGSSSTSIPAPPPQKITLTGSEPLPKSLHTNLPSLVNHESHSLTSAEGGPLLSALSRANIHSLWGVQCAVGGCLLEDRDTLCVAPTGSGKTLSYVLPTIVKLREPARKLKGTEEGKGVRALVVVPTHDLAVQIQGVIKAVTMGRHWRSMVLTKATEKAVWESAPGEAVKTGEDGDSEMKDGEDSGDEEEDEDDNESTGSVDEFAPKVSGNPEGLGIDVLVATPERLHHLIDSRRISLARTKYVILDESDRLLSSDFLPQVEPILSACSNPAVQKCFLSATMPAGAESLAKKWLKDGGVRVVVGVKDSAVTTVDQSLLYTGSESGKLLALRNLISSGQLPYPSLIFVQSIDRAEELYKTLVLDGIKVDAVHGGKAKTKRDEAIKDFRVGAVWMLVVTEVLARGMDFRGVKVVINYDFPQTVPSYIHRIGRTGRAGRPGKAITFFNIEDGPYLRTIANVLRSSGCPVPEYMLDMKKPTKNEKKKLAKAPPKRKAVGGGGRDLNREAGKKKKQMVEASKKRKMLERKGKGGNEEKNDDEE.

Residues 53–115 (SSLDFFGDHP…PLPKSLHTNL (63 aa)) form a disordered region. Residues 58-70 (FGDHPHPQHKPEP) show a composition bias toward basic and acidic residues. Acidic residues predominate over residues 71–82 (EPESESESDFES). Residues 142–150 (NIHSLWGVQ) carry the Q motif motif. The region spanning 154 to 382 (GGCLLEDRDT…KKWLKDGGVR (229 aa)) is the Helicase ATP-binding domain. 167–174 (APTGSGKT) serves as a coordination point for ATP. The disordered stretch occupies residues 244–292 (ESAPGEAVKTGEDGDSEMKDGEDSGDEEEDEDDNESTGSVDEFAPKVSG). A compositionally biased stretch (basic and acidic residues) spans 252–265 (KTGEDGDSEMKDGE). Over residues 266–278 (DSGDEEEDEDDNE) the composition is skewed to acidic residues. The DEAD box motif lies at 329–332 (DESD). In terms of domain architecture, Helicase C-terminal spans 394–556 (TVDQSLLYTG…PVPEYMLDMK (163 aa)). The disordered stretch occupies residues 556–620 (KKPTKNEKKK…GNEEKNDDEE (65 aa)). The span at 562 to 575 (EKKKLAKAPPKRKA) shows a compositional bias: basic residues. 2 stretches are compositionally biased toward basic and acidic residues: residues 582–598 (DLNREAGKKKKQMVEAS) and 605–614 (ERKGKGGNEE).

This sequence belongs to the DEAD box helicase family. DDX52/ROK1 subfamily. As to quaternary structure, interacts with the U3 snoRNA and is associated with the 90S and 40S pre-ribosomes.

The protein resides in the nucleus. It is found in the nucleolus. The enzyme catalyses ATP + H2O = ADP + phosphate + H(+). Its function is as follows. ATP-dependent RNA helicase involved in 40S ribosomal subunit biogenesis. Required for the processing and cleavage of 35S pre-rRNA at sites A0, A1, and A2, leading to mature 18S rRNA. This chain is ATP-dependent RNA helicase ROK1 (ROK1), found in Cryptococcus neoformans var. neoformans serotype D (strain B-3501A) (Filobasidiella neoformans).